A 510-amino-acid polypeptide reads, in one-letter code: Conditioned medium factor receptor 1 (510 aa).

The Cytoplasmic segment spans residues 1 to 36 (MDSKYIQKTLSAITEQITKNAAVQKVLDNKFVKEHK). A helical transmembrane segment spans residues 37 to 55 (YAAAAATVGLGVVAATTIV). Residues 56 to 510 (KAVNCEGKRY…QGKKQIKKLD (455 aa)) are Extracellular-facing.

It localises to the membrane. Receptor for cmfA, that appears to mediate the G-independent cmfA signal transduction. This chain is Conditioned medium factor receptor 1 (cmfB), found in Dictyostelium discoideum (Social amoeba).